The sequence spans 190 residues: Small ribosomal subunit protein uS5 (190 aa).

The S5 DRBM domain occupies 22-85; it reads FVDKLVHINR…DSAKRNLTRV (64 aa).

The protein belongs to the universal ribosomal protein uS5 family. In terms of assembly, part of the 30S ribosomal subunit. Contacts proteins S4 and S8.

With S4 and S12 plays an important role in translational accuracy. Functionally, located at the back of the 30S subunit body where it stabilizes the conformation of the head with respect to the body. This Bradyrhizobium sp. (strain BTAi1 / ATCC BAA-1182) protein is Small ribosomal subunit protein uS5.